The following is a 110-amino-acid chain: Phosphoribosyl-ATP pyrophosphatase (110 aa).

It belongs to the PRA-PH family.

Its subcellular location is the cytoplasm. The catalysed reaction is 1-(5-phospho-beta-D-ribosyl)-ATP + H2O = 1-(5-phospho-beta-D-ribosyl)-5'-AMP + diphosphate + H(+). The protein operates within amino-acid biosynthesis; L-histidine biosynthesis; L-histidine from 5-phospho-alpha-D-ribose 1-diphosphate: step 2/9. The protein is Phosphoribosyl-ATP pyrophosphatase of Pseudomonas savastanoi pv. phaseolicola (strain 1448A / Race 6) (Pseudomonas syringae pv. phaseolicola (strain 1448A / Race 6)).